The primary structure comprises 204 residues: Putative peroxiredoxin ycf42 (204 aa).

The 159-residue stretch at 5 to 163 (PKIGKTPPNF…LLRILESIQY (159 aa)) folds into the Thioredoxin domain.

Belongs to the peroxiredoxin family. AhpC/Prx1 subfamily.

It localises to the plastid. The protein resides in the chloroplast. It catalyses the reaction a hydroperoxide + [protein]-dithiol = [protein]-disulfide + an alcohol + H2O. The chain is Putative peroxiredoxin ycf42 (ycf42) from Trieres chinensis (Marine centric diatom).